Reading from the N-terminus, the 498-residue chain is ATP synthase subunit beta, chloroplastic (498 aa).

172–179 is an ATP binding site; it reads GGAGVGKT.

Belongs to the ATPase alpha/beta chains family. As to quaternary structure, F-type ATPases have 2 components, CF(1) - the catalytic core - and CF(0) - the membrane proton channel. CF(1) has five subunits: alpha(3), beta(3), gamma(1), delta(1), epsilon(1). CF(0) has four main subunits: a(1), b(1), b'(1) and c(9-12).

Its subcellular location is the plastid. The protein localises to the chloroplast thylakoid membrane. It catalyses the reaction ATP + H2O + 4 H(+)(in) = ADP + phosphate + 5 H(+)(out). Its function is as follows. Produces ATP from ADP in the presence of a proton gradient across the membrane. The catalytic sites are hosted primarily by the beta subunits. The polypeptide is ATP synthase subunit beta, chloroplastic (Zea mays (Maize)).